A 253-amino-acid polypeptide reads, in one-letter code: 1-(5-phosphoribosyl)-5-[(5-phosphoribosylamino)methylideneamino] imidazole-4-carboxamide isomerase (253 aa).

D8 acts as the Proton acceptor in catalysis. D131 (proton donor) is an active-site residue.

The protein belongs to the HisA/HisF family.

Its subcellular location is the cytoplasm. It catalyses the reaction 1-(5-phospho-beta-D-ribosyl)-5-[(5-phospho-beta-D-ribosylamino)methylideneamino]imidazole-4-carboxamide = 5-[(5-phospho-1-deoxy-D-ribulos-1-ylimino)methylamino]-1-(5-phospho-beta-D-ribosyl)imidazole-4-carboxamide. Its pathway is amino-acid biosynthesis; L-histidine biosynthesis; L-histidine from 5-phospho-alpha-D-ribose 1-diphosphate: step 4/9. This chain is 1-(5-phosphoribosyl)-5-[(5-phosphoribosylamino)methylideneamino] imidazole-4-carboxamide isomerase, found in Polynucleobacter necessarius subsp. necessarius (strain STIR1).